The sequence spans 82 residues: Large ribosomal subunit protein uL23 (82 aa).

Belongs to the universal ribosomal protein uL23 family. As to quaternary structure, part of the 50S ribosomal subunit. Contacts protein L29.

Functionally, binds to 23S rRNA. One of the proteins that surrounds the polypeptide exit tunnel on the outside of the ribosome. The protein is Large ribosomal subunit protein uL23 of Picrophilus torridus (strain ATCC 700027 / DSM 9790 / JCM 10055 / NBRC 100828 / KAW 2/3).